The sequence spans 351 residues: GTPase Obg (351 aa).

The 159-residue stretch at 1-159 (MKFLDQAKVY…RWIWLRLKLI (159 aa)) folds into the Obg domain. The OBG-type G domain occupies 160-328 (ADVGLVGLPN…LCGSAWDIVL (169 aa)). GTP contacts are provided by residues 166-173 (GLPNAGKS), 191-195 (FTTLY), 213-216 (DIPG), 280-283 (NKID), and 309-311 (SGV). Serine 173 and threonine 193 together coordinate Mg(2+).

Belongs to the TRAFAC class OBG-HflX-like GTPase superfamily. OBG GTPase family. In terms of assembly, monomer. The cofactor is Mg(2+).

The protein localises to the cytoplasm. In terms of biological role, an essential GTPase which binds GTP, GDP and possibly (p)ppGpp with moderate affinity, with high nucleotide exchange rates and a fairly low GTP hydrolysis rate. Plays a role in control of the cell cycle, stress response, ribosome biogenesis and in those bacteria that undergo differentiation, in morphogenesis control. The chain is GTPase Obg from Maricaulis maris (strain MCS10) (Caulobacter maris).